Consider the following 267-residue polypeptide: Tryptophan synthase alpha chain (267 aa).

Catalysis depends on proton acceptor residues E49 and D60.

This sequence belongs to the TrpA family. As to quaternary structure, tetramer of two alpha and two beta chains.

The catalysed reaction is (1S,2R)-1-C-(indol-3-yl)glycerol 3-phosphate + L-serine = D-glyceraldehyde 3-phosphate + L-tryptophan + H2O. It participates in amino-acid biosynthesis; L-tryptophan biosynthesis; L-tryptophan from chorismate: step 5/5. The alpha subunit is responsible for the aldol cleavage of indoleglycerol phosphate to indole and glyceraldehyde 3-phosphate. In Acidothermus cellulolyticus (strain ATCC 43068 / DSM 8971 / 11B), this protein is Tryptophan synthase alpha chain.